A 284-amino-acid polypeptide reads, in one-letter code: Tripartite motif-containing protein 12A (284 aa).

The RING-type zinc-finger motif lies at 15-59 (CPVCLNLMVKPVSADCGHTFCQGCITLYFESIKCDKKVFICPVCR). The B box-type zinc-finger motif lies at 91–132 (QKVFNCARHGKKLQLFCRKDMMAICWLCERSQEHRGHKTALI). Zn(2+) is bound by residues Cys96, His99, Cys118, and His124. Residues 130-234 (ALIEEVAQEY…QSKLLEDFIS (105 aa)) are a coiled coil.

Belongs to the TRIM/RBCC family. In terms of tissue distribution, expressed in embryonic CNS, liver, kidney, olfactory epithelium.

It is found in the cytoplasm. The protein is Tripartite motif-containing protein 12A (Trim12a) of Mus musculus (Mouse).